The chain runs to 601 residues: DNA ligase 2 (601 aa).

Residue Glu-263 participates in ATP binding. The active-site N6-AMP-lysine intermediate is the Lys-265. Positions 270, 285, 314, 354, 432, and 438 each coordinate ATP.

It belongs to the ATP-dependent DNA ligase family. Mg(2+) is required as a cofactor.

It carries out the reaction ATP + (deoxyribonucleotide)n-3'-hydroxyl + 5'-phospho-(deoxyribonucleotide)m = (deoxyribonucleotide)n+m + AMP + diphosphate.. In terms of biological role, DNA ligase that seals nicks in double-stranded DNA during DNA replication, DNA recombination and DNA repair. The chain is DNA ligase 2 from Thermofilum pendens (strain DSM 2475 / Hrk 5).